The primary structure comprises 193 residues: Xanthine phosphoribosyltransferase (193 aa).

Xanthine contacts are provided by Leu20 and Thr27. 128 to 132 (ANGQA) lines the 5-phospho-alpha-D-ribose 1-diphosphate pocket. Lys156 lines the xanthine pocket.

This sequence belongs to the purine/pyrimidine phosphoribosyltransferase family. Xpt subfamily. Homodimer.

Its subcellular location is the cytoplasm. It carries out the reaction XMP + diphosphate = xanthine + 5-phospho-alpha-D-ribose 1-diphosphate. Its pathway is purine metabolism; XMP biosynthesis via salvage pathway; XMP from xanthine: step 1/1. Its function is as follows. Converts the preformed base xanthine, a product of nucleic acid breakdown, to xanthosine 5'-monophosphate (XMP), so it can be reused for RNA or DNA synthesis. The protein is Xanthine phosphoribosyltransferase of Streptococcus pneumoniae serotype 2 (strain D39 / NCTC 7466).